Here is a 564-residue protein sequence, read N- to C-terminus: Ell-associated factor Eaf (564 aa).

Disordered regions lie at residues 179 to 255 (SGPG…MITD) and 270 to 564 (QANI…DDDD). The span at 186 to 205 (ENSTMRVSSKTKVSTGSRRN) shows a compositional bias: polar residues. The residue at position 215 (Ser-215) is a Phosphoserine. Residues 274–283 (SGSSTGSSSG) show a composition bias toward low complexity. The span at 297–309 (GKQRQAHGKRQQI) shows a compositional bias: basic residues. 3 stretches are compositionally biased toward low complexity: residues 315–329 (PPVQ…QQQP), 343–387 (QQQQ…QQRP), and 409–420 (ASQSVAQAAAVL). Positions 438–453 (DSSDSDSGSDSDDSTE) are enriched in acidic residues. Composition is skewed to low complexity over residues 463-505 (EQQQ…NQLP), 523-533 (QQPQPQPQQQQ), and 546-564 (NDLL…DDDD).

It belongs to the EAF family.

It is found in the nucleus. Promotes transcriptional elongation by Su(Tpl)/ELL. Essential for development. The chain is Ell-associated factor Eaf from Drosophila pseudoobscura pseudoobscura (Fruit fly).